The primary structure comprises 440 residues: Chromosome partition protein MukF (440 aa).

Residues 208 to 236 are leucine-zipper; that stretch reads LSETSGTLRELQDTLEAAGDKLQANLLRI.

It belongs to the MukF family. In terms of assembly, interacts, and probably forms a ternary complex, with MukE and MukB via its C-terminal region. The complex formation is stimulated by calcium or magnesium. It is required for an interaction between MukE and MukB.

It is found in the cytoplasm. Its subcellular location is the nucleoid. Functionally, involved in chromosome condensation, segregation and cell cycle progression. May participate in facilitating chromosome segregation by condensation DNA from both sides of a centrally located replisome during cell division. Not required for mini-F plasmid partitioning. Probably acts via its interaction with MukB and MukE. Overexpression results in anucleate cells. It has a calcium binding activity. In Escherichia fergusonii (strain ATCC 35469 / DSM 13698 / CCUG 18766 / IAM 14443 / JCM 21226 / LMG 7866 / NBRC 102419 / NCTC 12128 / CDC 0568-73), this protein is Chromosome partition protein MukF.